Here is a 284-residue protein sequence, read N- to C-terminus: Proteasome subunit pbs-5 (284 aa).

Positions 1 to 64 are cleaved as a propeptide — removed in mature form; it reads MWGETFDDFE…AGKSMQFRKG (64 aa). Residue Thr-65 is the Nucleophile of the active site.

It belongs to the peptidase T1B family. As to quaternary structure, the 26S proteasome consists of a 20S proteasome core and two 19S regulatory subunits. The 20S proteasome core is composed of 28 subunits that are arranged in four stacked rings, resulting in a barrel-shaped structure. The two end rings are each formed by seven alpha subunits, and the two central rings are each formed by seven beta subunits. The catalytic chamber with the active sites is on the inside of the barrel.

The protein resides in the cytoplasm. The protein localises to the nucleus. It catalyses the reaction Cleavage of peptide bonds with very broad specificity.. Component of the 20S core proteasome complex involved in the proteolytic degradation of most intracellular proteins. This complex plays numerous essential roles within the cell by associating with different regulatory particles. Associated with two 19S regulatory particles, forms the 26S proteasome and thus participates in the ATP-dependent degradation of ubiquitinated proteins. The 26S proteasome plays a key role in the maintenance of protein homeostasis by removing misfolded or damaged proteins that could impair cellular functions, and by removing proteins whose functions are no longer required. The polypeptide is Proteasome subunit pbs-5 (Caenorhabditis elegans).